The primary structure comprises 203 residues: MKELILASASPRRKEILDSLGVLFSVKISNFDESSITEKDPVKRCILTARGKAENLFKTLPQNEGAQKLILAADTLVFAENTAFPNEKIIFGKPKNEKEAEMMLKSHSGSLHFVVSAICLLDCKTGQINEKHSVSKVFFKKLSDKEISAYLKTDEWKDAAGAYKIQGKASFFIEKIEGSYTGIVGLPVRELYEILNKTEFRIL.

The active-site Proton acceptor is the Asp74.

This sequence belongs to the Maf family. YhdE subfamily. The cofactor is a divalent metal cation.

It localises to the cytoplasm. It catalyses the reaction dTTP + H2O = dTMP + diphosphate + H(+). The enzyme catalyses UTP + H2O = UMP + diphosphate + H(+). Nucleoside triphosphate pyrophosphatase that hydrolyzes dTTP and UTP. May have a dual role in cell division arrest and in preventing the incorporation of modified nucleotides into cellular nucleic acids. The polypeptide is dTTP/UTP pyrophosphatase (Treponema denticola (strain ATCC 35405 / DSM 14222 / CIP 103919 / JCM 8153 / KCTC 15104)).